A 390-amino-acid chain; its full sequence is MLQFDLLKTDPSSHARRGQLTLNHGVVQTPIFMPVGTYGTVKGVMPRSLQEMGAQIILGNTFHLWMRPGLDIMQSFGGLHGFEKWDKPILTDSGGFQVWSLGAMRKITEEGVHFASPVNGDKLFMSPEVSMQIQTVLNSDIVMQLDECTPYETNGHKTTEAEARKSMEMSRRWAKRSSDEFQRLGNPNALFGIVQGGMYENLREESLQALVEMDFPGYAVGGVSVGEPKDEMLAIMAHTPHRLPAHKPRYLMGVGTPEDLVQGVADGVDMFDCVMPTRNARNGTIFTRYGDLKIRNARHKTDHQPLDPSCTCHACAGTSGVSWEQGGRDGFSRAYLHHLDRCGEMLGPMLTTIHNLHYYLNLMQEVRNALEAGNFTEMRARFKAERARGV.

Aspartate 92 acts as the Proton acceptor in catalysis. Residues 92-96, aspartate 146, glutamine 195, and glycine 222 contribute to the substrate site; that span reads DSGGF. The interval 253–259 is RNA binding; the sequence is GVGTPED. Aspartate 272 acts as the Nucleophile in catalysis. Residues 277-281 form an RNA binding; important for wobble base 34 recognition region; the sequence is TRNAR. The Zn(2+) site is built by cysteine 310, cysteine 312, cysteine 315, and histidine 354.

It belongs to the queuine tRNA-ribosyltransferase family. Homodimer. Within each dimer, one monomer is responsible for RNA recognition and catalysis, while the other monomer binds to the replacement base PreQ1. Zn(2+) is required as a cofactor.

It carries out the reaction 7-aminomethyl-7-carbaguanine + guanosine(34) in tRNA = 7-aminomethyl-7-carbaguanosine(34) in tRNA + guanine. It functions in the pathway tRNA modification; tRNA-queuosine biosynthesis. Catalyzes the base-exchange of a guanine (G) residue with the queuine precursor 7-aminomethyl-7-deazaguanine (PreQ1) at position 34 (anticodon wobble position) in tRNAs with GU(N) anticodons (tRNA-Asp, -Asn, -His and -Tyr). Catalysis occurs through a double-displacement mechanism. The nucleophile active site attacks the C1' of nucleotide 34 to detach the guanine base from the RNA, forming a covalent enzyme-RNA intermediate. The proton acceptor active site deprotonates the incoming PreQ1, allowing a nucleophilic attack on the C1' of the ribose to form the product. After dissociation, two additional enzymatic reactions on the tRNA convert PreQ1 to queuine (Q), resulting in the hypermodified nucleoside queuosine (7-(((4,5-cis-dihydroxy-2-cyclopenten-1-yl)amino)methyl)-7-deazaguanosine). The protein is Queuine tRNA-ribosyltransferase of Delftia acidovorans (strain DSM 14801 / SPH-1).